The primary structure comprises 555 residues: Transcriptional adapter 2b (555 aa).

The ZZ-type zinc-finger motif lies at 8–63 (FTKYNCTNCQDDIQGIRVHCAECENFDLCLQCFAAGAEIGAHQNNHSYQFMDTGTS). Residues Cys13, Cys16, Cys27, Cys30, Cys36, Cys39, His49, and His53 each contribute to the Zn(2+) site. The 53-residue stretch at 69–121 (RGKGAWTAREEIRLLDAIEQYGFGNWEDISKHIETKSAEDAKEEYVNKFVNGT) folds into the SANT domain. The interval 318–372 (THRSTGPYGHGKTDHTHTSNGSHRPPSSSLHSPQPNLRKVEMSSGGEASSNSIAP) is disordered. A compositionally biased stretch (low complexity) spans 339-352 (SHRPPSSSLHSPQP). Residues 363–372 (GEASSNSIAP) show a composition bias toward polar residues.

Component of histone acetyltransferase complexes containing Gcn5 and Ada3. In terms of assembly, can heterooligomerize with Isoform A. Component of the Spt-Ada-Gcn5 acetyltransferase (SAGA) complex consisting of Ada1, Ada2b (Isoform B), Ada3, wda, Saf6, Spt3, Spt7, Spt20, Taf9, Taf10b, Taf12, Nipped-A/Tra1, Sf3b3, Sf3b5, not/nonstop, Sgf11, Sgf29, e(y)2, Atxn7 and Gcn5. Taf5 and Taf10, which has partially redundant properties with Taf10b, may also be part of this complex. Interacts (via C-terminus) with Spt3 and Taf12; the interactions are direct. Interacts with Ada3; the interaction is probably direct. May also interact directly with Spt7 and Gcn5. Interacts with p53. As to quaternary structure, can heterooligomerize with Isoform B. Component of the Chiffon histone acetyltransferase (CHAT) complex consisting of Ada3, Sgf29, Gcn5, chif/chiffon and Ada2b (Isoform A). Interacts (via N-terminus) with Gcn5 and Ada3; the interaction is direct. Can interact directly with Spt7 in vitro but in vivo this interaction is not stable probably due to the absence of other SAGA components. Interacts with p53. Expressed in nurse cells of stage 10 egg chambers and transcripts are dumped into the oocyte when nurse cells degenerate at late oogenesis.

Its subcellular location is the nucleus. Functionally, component of several Gcn5-containing histone acetyltransferase complexes that regulate nucleosome organization; involved in acetylation of histone H3, particularly on Lys-10 (H3K9ac) and Lys-15 (H3K14ac). Regulates the transcription of a subset of genes during development; affects recruitment of RNA polymerase II. May be involved in the function of some acidic activation domains, which activate transcription at distant sites. Involved in the p53-dependent apoptosis pathway response to DNA damage by genotoxic agents. Component of the SAGA histone acetyltransferase complex, which predominantly acetylates histone H3. Its function is as follows. Component of the CHAT histone acetyltransferase complex, which predominantly acetylates histone H3. In Drosophila melanogaster (Fruit fly), this protein is Transcriptional adapter 2b.